The following is a 328-amino-acid chain: MSSTPNKHADYPRLVADIGGTNARFALETAPCVIEKVAVLPCKEYDTVTDAVRAYLNQSGATGVRHAAFAIANPILGDWVQMTNHHWAFSIETTRQALGLDTLILLNDFTAQALAVTQTSSKDLMQVGGQKPVEFAPKAVIGPGTGLGVSGLVHSPAGWVALAGEGGHTSFPPFDDMEVLIWQYAKNKYRHVSAERFLSGAGLSLIYETLAVKQKAEPAKLMPSEITEKALNCESPLCRQALDIFCAMLGTVASNLALTLGARGGVYLCGGIIPRMLDYFKTSPFRSRFENKGRFEAYLAAIPVYVVLSEFPGIAGAAAALGNHLKNV.

16–21 (ADIGGT) provides a ligand contact to ATP.

It belongs to the bacterial glucokinase family.

The protein resides in the cytoplasm. The catalysed reaction is D-glucose + ATP = D-glucose 6-phosphate + ADP + H(+). This is Glucokinase from Neisseria gonorrhoeae (strain ATCC 700825 / FA 1090).